The primary structure comprises 691 residues: Elongation factor G (691 aa).

In terms of domain architecture, tr-type G spans 8-283 (EDYRNFGIMA…AVVDYLPSPV (276 aa)). Residues 17–24 (AHIDAGKT), 81–85 (DTPGH), and 135–138 (NKMD) each bind GTP.

The protein belongs to the TRAFAC class translation factor GTPase superfamily. Classic translation factor GTPase family. EF-G/EF-2 subfamily.

It is found in the cytoplasm. Its function is as follows. Catalyzes the GTP-dependent ribosomal translocation step during translation elongation. During this step, the ribosome changes from the pre-translocational (PRE) to the post-translocational (POST) state as the newly formed A-site-bound peptidyl-tRNA and P-site-bound deacylated tRNA move to the P and E sites, respectively. Catalyzes the coordinated movement of the two tRNA molecules, the mRNA and conformational changes in the ribosome. This chain is Elongation factor G, found in Methylorubrum populi (strain ATCC BAA-705 / NCIMB 13946 / BJ001) (Methylobacterium populi).